An 83-amino-acid polypeptide reads, in one-letter code: Translation initiation factor IF-1 (83 aa).

One can recognise an S1-like domain in the interval 1–72 (MAKEELIEMQ…SKGRITFRHL (72 aa)).

The protein belongs to the IF-1 family. As to quaternary structure, component of the 30S ribosomal translation pre-initiation complex which assembles on the 30S ribosome in the order IF-2 and IF-3, IF-1 and N-formylmethionyl-tRNA(fMet); mRNA recruitment can occur at any time during PIC assembly.

It localises to the cytoplasm. Its function is as follows. One of the essential components for the initiation of protein synthesis. Stabilizes the binding of IF-2 and IF-3 on the 30S subunit to which N-formylmethionyl-tRNA(fMet) subsequently binds. Helps modulate mRNA selection, yielding the 30S pre-initiation complex (PIC). Upon addition of the 50S ribosomal subunit IF-1, IF-2 and IF-3 are released leaving the mature 70S translation initiation complex. The chain is Translation initiation factor IF-1 from Verminephrobacter eiseniae (strain EF01-2).